The sequence spans 426 residues: MLDPALLRQHPADLAERLRSTRGFDLNTAELESLESERKRIQVRTQELQSLRNSKSKAIGQAKAKGEDVAALMAEVAGFGDELKASEDALDVIRAQLEGIALGIPNLPAANVPAGKDESENVEQARWGTPRQFDFAVKDHVELGAPHGWLDGETAAKLSGARFTVLRGPIARLHRALAQFMLDLHVGEHGYEETNVPLLVNADSMRGTGQLPKFEDDLFQTEVGDSKRYLIPTSEVPLTNIVRDAIVDAERLPLRMTAHSMCFRAEAGSGGRDTRGMIRQHQFEKVELVTACSPEDSEAEHQRMTRCAEVVLEKLGLPYRKVLLCTGDMGFSAIKTYDLEVWLPSQATYREISSCSNCGDFQARRMQARWRNPASGKPELLHTLNGSGTAVGRAMIAVMENYQNADGSIDVPDALRPYMGGLERIG.

233–235 (TSE) lines the L-serine pocket. Residue 264–266 (RAE) participates in ATP binding. Residue Glu287 coordinates L-serine. An ATP-binding site is contributed by 351–354 (EISS). Ser387 provides a ligand contact to L-serine.

The protein belongs to the class-II aminoacyl-tRNA synthetase family. Type-1 seryl-tRNA synthetase subfamily. In terms of assembly, homodimer. The tRNA molecule binds across the dimer.

It localises to the cytoplasm. It catalyses the reaction tRNA(Ser) + L-serine + ATP = L-seryl-tRNA(Ser) + AMP + diphosphate + H(+). The enzyme catalyses tRNA(Sec) + L-serine + ATP = L-seryl-tRNA(Sec) + AMP + diphosphate + H(+). It functions in the pathway aminoacyl-tRNA biosynthesis; selenocysteinyl-tRNA(Sec) biosynthesis; L-seryl-tRNA(Sec) from L-serine and tRNA(Sec): step 1/1. Its function is as follows. Catalyzes the attachment of serine to tRNA(Ser). Is also able to aminoacylate tRNA(Sec) with serine, to form the misacylated tRNA L-seryl-tRNA(Sec), which will be further converted into selenocysteinyl-tRNA(Sec). The chain is Serine--tRNA ligase from Xanthomonas campestris pv. campestris (strain 8004).